A 536-amino-acid chain; its full sequence is Bicoumarin synthase desC (536 aa).

Residues 12–32 traverse the membrane as a helical segment; that stretch reads YVALAGITGFFLVFLGFLVVI. N-linked (GlcNAc...) asparagine glycosylation is found at asparagine 149 and asparagine 371. Cysteine 480 contributes to the heme binding site.

It belongs to the cytochrome P450 family. The cofactor is heme.

Its subcellular location is the membrane. It carries out the reaction 2 7-demethylsiderin + NADPH + O2 = desertorin A + NADP(+) + 2 H2O. Its pathway is secondary metabolite biosynthesis. Functionally, non-reducing polyketide synthase; part of the gene cluster that mediates the biosynthesis of the bicoumarin desertorin. The non-reducing polyketide synthase desS first catalyzes the formation of the pentaketidic 4,7-dihydroxy-5-methylcoumarin from acetyl coenzyme A and 4 malonyl coenzyme A molecules. Further O-methylation by desB leads to the formation of 7-demethylsiderin. Then, an oxidative phenol coupling catalyzed by the cytochrome P450 monooxygenase desC forms the 6,8'-dimer M-desertorin A via dimerization the monomeric precursor, 7-demethylsiderin. M-desertorin A is further converted to M-desertorin C. The chain is Bicoumarin synthase desC from Aspergillus desertorum (Emericella desertorum).